A 141-amino-acid polypeptide reads, in one-letter code: Large ribosomal subunit protein uL11 (141 aa).

Belongs to the universal ribosomal protein uL11 family. Part of the ribosomal stalk of the 50S ribosomal subunit. Interacts with L10 and the large rRNA to form the base of the stalk. L10 forms an elongated spine to which L12 dimers bind in a sequential fashion forming a multimeric L10(L12)X complex. In terms of processing, one or more lysine residues are methylated.

Functionally, forms part of the ribosomal stalk which helps the ribosome interact with GTP-bound translation factors. The chain is Large ribosomal subunit protein uL11 from Wolinella succinogenes (strain ATCC 29543 / DSM 1740 / CCUG 13145 / JCM 31913 / LMG 7466 / NCTC 11488 / FDC 602W) (Vibrio succinogenes).